A 330-amino-acid chain; its full sequence is Phospho-N-acetylmuramoyl-pentapeptide-transferase (330 aa).

Transmembrane regions (helical) follow at residues 13–33 (VFVFILSFAFSLILGPVLIPM), 58–78 (PTMGGMIFLIPVTVLAAFYAG), 83–103 (ILPLIFVTLGFGLIGFIDDFI), 113–133 (LYWNQKMFGLLLVAVTFAVYL), 152–172 (VSLGWLFVPFVVLVLIASTNA), 179–199 (LDGLAAGVTLIVTVFFTIVAM), 209–229 (MFSAMVAGGCLGFLTFNAYPA), 231–250 (IFMGDTGSLALGGAVGAIAI), and 304–324 (VKVVLVFWTITVLLCILGFFA).

This sequence belongs to the glycosyltransferase 4 family. MraY subfamily. The cofactor is Mg(2+).

The protein localises to the cell membrane. The enzyme catalyses UDP-N-acetyl-alpha-D-muramoyl-L-alanyl-gamma-D-glutamyl-meso-2,6-diaminopimeloyl-D-alanyl-D-alanine + di-trans,octa-cis-undecaprenyl phosphate = di-trans,octa-cis-undecaprenyl diphospho-N-acetyl-alpha-D-muramoyl-L-alanyl-D-glutamyl-meso-2,6-diaminopimeloyl-D-alanyl-D-alanine + UMP. The protein operates within cell wall biogenesis; peptidoglycan biosynthesis. Catalyzes the initial step of the lipid cycle reactions in the biosynthesis of the cell wall peptidoglycan: transfers peptidoglycan precursor phospho-MurNAc-pentapeptide from UDP-MurNAc-pentapeptide onto the lipid carrier undecaprenyl phosphate, yielding undecaprenyl-pyrophosphoryl-MurNAc-pentapeptide, known as lipid I. This is Phospho-N-acetylmuramoyl-pentapeptide-transferase from Acetivibrio thermocellus (strain ATCC 27405 / DSM 1237 / JCM 9322 / NBRC 103400 / NCIMB 10682 / NRRL B-4536 / VPI 7372) (Clostridium thermocellum).